The sequence spans 213 residues: Orotate phosphoribosyltransferase (213 aa).

Residue K26 coordinates 5-phospho-alpha-D-ribose 1-diphosphate. Residue 34 to 35 (FF) participates in orotate binding. Residues 72–73 (YK), R99, K100, K103, H105, and 124–132 (DDVITAGTA) contribute to the 5-phospho-alpha-D-ribose 1-diphosphate site. Residues T128 and R156 each contribute to the orotate site.

The protein belongs to the purine/pyrimidine phosphoribosyltransferase family. PyrE subfamily. As to quaternary structure, homodimer. Requires Mg(2+) as cofactor.

The enzyme catalyses orotidine 5'-phosphate + diphosphate = orotate + 5-phospho-alpha-D-ribose 1-diphosphate. Its pathway is pyrimidine metabolism; UMP biosynthesis via de novo pathway; UMP from orotate: step 1/2. Functionally, catalyzes the transfer of a ribosyl phosphate group from 5-phosphoribose 1-diphosphate to orotate, leading to the formation of orotidine monophosphate (OMP). This Pseudomonas syringae pv. syringae (strain B728a) protein is Orotate phosphoribosyltransferase.